Reading from the N-terminus, the 276-residue chain is Large ribosomal subunit protein uL2 (276 aa).

The segment at 224–276 (AMNPIDHPHGGGEGKTSGGRNPVTPWGVSTKGKKTRKKNKSSNKYIKRVSDKG) is disordered. Residues 254–270 (KGKKTRKKNKSSNKYIK) are compositionally biased toward basic residues.

Belongs to the universal ribosomal protein uL2 family. In terms of assembly, part of the 50S ribosomal subunit. Forms a bridge to the 30S subunit in the 70S ribosome.

In terms of biological role, one of the primary rRNA binding proteins. Required for association of the 30S and 50S subunits to form the 70S ribosome, for tRNA binding and peptide bond formation. It has been suggested to have peptidyltransferase activity; this is somewhat controversial. Makes several contacts with the 16S rRNA in the 70S ribosome. In Ehrlichia ruminantium (strain Gardel), this protein is Large ribosomal subunit protein uL2.